A 178-amino-acid chain; its full sequence is NAD(P)H-quinone oxidoreductase subunit J (178 aa).

This sequence belongs to the complex I 30 kDa subunit family. NDH-1 can be composed of about 15 different subunits; different subcomplexes with different compositions have been identified which probably have different functions.

The protein localises to the cellular thylakoid membrane. The enzyme catalyses a plastoquinone + NADH + (n+1) H(+)(in) = a plastoquinol + NAD(+) + n H(+)(out). It carries out the reaction a plastoquinone + NADPH + (n+1) H(+)(in) = a plastoquinol + NADP(+) + n H(+)(out). In terms of biological role, NDH-1 shuttles electrons from an unknown electron donor, via FMN and iron-sulfur (Fe-S) centers, to quinones in the respiratory and/or the photosynthetic chain. The immediate electron acceptor for the enzyme in this species is believed to be plastoquinone. Couples the redox reaction to proton translocation, and thus conserves the redox energy in a proton gradient. Cyanobacterial NDH-1 also plays a role in inorganic carbon-concentration. The chain is NAD(P)H-quinone oxidoreductase subunit J from Crocosphaera subtropica (strain ATCC 51142 / BH68) (Cyanothece sp. (strain ATCC 51142)).